The chain runs to 452 residues: Tubulin gamma chain (452 aa).

Residue 142 to 148 participates in GTP binding; that stretch reads AGGTGSG.

Belongs to the tubulin family.

It is found in the cytoplasm. Its subcellular location is the cytoskeleton. It localises to the microtubule organizing center. The protein localises to the centrosome. Functionally, tubulin is the major constituent of microtubules. The gamma chain is found at microtubule organizing centers (MTOC) such as the spindle poles or the centrosome, suggesting that it is involved in the minus-end nucleation of microtubule assembly. This Plasmodium falciparum (isolate NF54) protein is Tubulin gamma chain (G-TUB).